Reading from the N-terminus, the 280-residue chain is Phosphatidylserine decarboxylase proenzyme (280 aa).

Catalysis depends on charge relay system; for autoendoproteolytic cleavage activity residues Asp-86, His-143, and Ser-246. Ser-246 acts as the Schiff-base intermediate with substrate; via pyruvic acid; for decarboxylase activity in catalysis. Ser-246 bears the Pyruvic acid (Ser); by autocatalysis mark.

Belongs to the phosphatidylserine decarboxylase family. PSD-B subfamily. Prokaryotic type I sub-subfamily. Heterodimer of a large membrane-associated beta subunit and a small pyruvoyl-containing alpha subunit. Pyruvate is required as a cofactor. Post-translationally, is synthesized initially as an inactive proenzyme. Formation of the active enzyme involves a self-maturation process in which the active site pyruvoyl group is generated from an internal serine residue via an autocatalytic post-translational modification. Two non-identical subunits are generated from the proenzyme in this reaction, and the pyruvate is formed at the N-terminus of the alpha chain, which is derived from the carboxyl end of the proenzyme. The autoendoproteolytic cleavage occurs by a canonical serine protease mechanism, in which the side chain hydroxyl group of the serine supplies its oxygen atom to form the C-terminus of the beta chain, while the remainder of the serine residue undergoes an oxidative deamination to produce ammonia and the pyruvoyl prosthetic group on the alpha chain. During this reaction, the Ser that is part of the protease active site of the proenzyme becomes the pyruvoyl prosthetic group, which constitutes an essential element of the active site of the mature decarboxylase.

It localises to the cell membrane. It carries out the reaction a 1,2-diacyl-sn-glycero-3-phospho-L-serine + H(+) = a 1,2-diacyl-sn-glycero-3-phosphoethanolamine + CO2. It participates in phospholipid metabolism; phosphatidylethanolamine biosynthesis; phosphatidylethanolamine from CDP-diacylglycerol: step 2/2. Catalyzes the formation of phosphatidylethanolamine (PtdEtn) from phosphatidylserine (PtdSer). This chain is Phosphatidylserine decarboxylase proenzyme, found in Brevibacillus brevis (strain 47 / JCM 6285 / NBRC 100599).